We begin with the raw amino-acid sequence, 210 residues long: ATP phosphoribosyltransferase (210 aa).

The protein belongs to the ATP phosphoribosyltransferase family. Short subfamily. Heteromultimer composed of HisG and HisZ subunits.

The protein resides in the cytoplasm. It catalyses the reaction 1-(5-phospho-beta-D-ribosyl)-ATP + diphosphate = 5-phospho-alpha-D-ribose 1-diphosphate + ATP. It participates in amino-acid biosynthesis; L-histidine biosynthesis; L-histidine from 5-phospho-alpha-D-ribose 1-diphosphate: step 1/9. Catalyzes the condensation of ATP and 5-phosphoribose 1-diphosphate to form N'-(5'-phosphoribosyl)-ATP (PR-ATP). Has a crucial role in the pathway because the rate of histidine biosynthesis seems to be controlled primarily by regulation of HisG enzymatic activity. The polypeptide is ATP phosphoribosyltransferase (hisG) (Synechocystis sp. (strain ATCC 27184 / PCC 6803 / Kazusa)).